The chain runs to 100 residues: MANVTDPRDIILSPVISEKSYGLIEDNVYTFIVAPDSNKTQIKIAIEKIFKVKVDSVNTANRPGKRKRTRTGFGQRKATKRAIVTLAAGSKPIDLFGAPA.

The protein belongs to the universal ribosomal protein uL23 family. In terms of assembly, part of the 50S ribosomal subunit. Contacts protein L29, and trigger factor when it is bound to the ribosome.

Functionally, one of the early assembly proteins it binds 23S rRNA. One of the proteins that surrounds the polypeptide exit tunnel on the outside of the ribosome. Forms the main docking site for trigger factor binding to the ribosome. The polypeptide is Large ribosomal subunit protein uL23 (Mycolicibacterium vanbaalenii (strain DSM 7251 / JCM 13017 / BCRC 16820 / KCTC 9966 / NRRL B-24157 / PYR-1) (Mycobacterium vanbaalenii)).